A 207-amino-acid chain; its full sequence is Ribonuclease HII (207 aa).

The 190-residue stretch at 10–199 folds into the RNase H type-2 domain; the sequence is RLIAGVDEVG…VRNALLDAEL (190 aa). Residues Asp-16, Glu-17, and Asp-108 each contribute to the a divalent metal cation site.

It belongs to the RNase HII family. The cofactor is Mn(2+). It depends on Mg(2+) as a cofactor.

The protein localises to the cytoplasm. The catalysed reaction is Endonucleolytic cleavage to 5'-phosphomonoester.. Functionally, endonuclease that specifically degrades the RNA of RNA-DNA hybrids. In Erwinia tasmaniensis (strain DSM 17950 / CFBP 7177 / CIP 109463 / NCPPB 4357 / Et1/99), this protein is Ribonuclease HII.